A 263-amino-acid polypeptide reads, in one-letter code: Glutathione S-transferase F8, chloroplastic (263 aa).

The N-terminal 49 residues, 1–49 (MGAIQARLPLFLSPPSIKHHTFLHSSSSNSNFKIRSNKSSSSSSSSIIM), are a transit peptide targeting the chloroplast. In terms of domain architecture, GST N-terminal spans 50 to 131 (ASIKVHGVPM…YLAEEYSEKG (82 aa)). Residues 60–61 (ST), 89–90 (HK), 102–103 (QI), and 115–116 (ES) contribute to the glutathione site. The GST C-terminal domain occupies 139-263 (CKKVKATTNV…WAKVIDLQKQ (125 aa)). Thr177 bears the Phosphothreonine mark.

The protein belongs to the GST superfamily. Phi family. Isoform 1 is predominantly expressed in leaves and isoform 2 in roots.

The protein resides in the plastid. The protein localises to the chloroplast. It is found in the cytoplasm. Its subcellular location is the cytosol. It catalyses the reaction RX + glutathione = an S-substituted glutathione + a halide anion + H(+). In vitro, possesses glutathione S-transferase activity toward 1-chloro-2,4-dinitrobenzene (CDNB) and glutathione peroxidase activity toward cumene hydroperoxide and linoleic acid-13-hydroperoxide. May be involved in the conjugation of reduced glutathione to a wide number of exogenous and endogenous hydrophobic electrophiles and have a detoxification role against certain herbicides. In Arabidopsis thaliana (Mouse-ear cress), this protein is Glutathione S-transferase F8, chloroplastic (GSTF8).